We begin with the raw amino-acid sequence, 649 residues long: Macrolide export ATP-binding/permease protein MacB 1 (649 aa).

One can recognise an ABC transporter domain in the interval 5 to 243; that stretch reads LELEGIRRSY…AAAELMSLTP (239 aa). An ATP-binding site is contributed by 41–48; sequence GASGSGKS. Helical transmembrane passes span 274-294, 420-440, 524-544, 578-598, and 608-628; these read ALTMLGIIIGIASVVSILVVG, VVGQVILVGNMPATVVGVVAE, LFLTLVAVISLVVGGIGVMNI, VLVCLIGGALGISLSFAIGLI, and IAFPPMALFSAFLCSTVIGVV.

Belongs to the ABC transporter superfamily. Macrolide exporter (TC 3.A.1.122) family. Homodimer. Part of the tripartite efflux system MacAB-TolC, which is composed of an inner membrane transporter, MacB, a periplasmic membrane fusion protein, MacA, and an outer membrane component, TolC. The complex forms a large protein conduit and can translocate molecules across both the inner and outer membranes. Interacts with MacA.

It localises to the cell inner membrane. Its function is as follows. Part of the tripartite efflux system MacAB-TolC. MacB is a non-canonical ABC transporter that contains transmembrane domains (TMD), which form a pore in the inner membrane, and an ATP-binding domain (NBD), which is responsible for energy generation. Confers resistance against macrolides. The protein is Macrolide export ATP-binding/permease protein MacB 1 of Yersinia pestis bv. Antiqua (strain Antiqua).